The chain runs to 146 residues: UPF0178 protein OB0454 (146 aa).

It belongs to the UPF0178 family.

The chain is UPF0178 protein OB0454 from Oceanobacillus iheyensis (strain DSM 14371 / CIP 107618 / JCM 11309 / KCTC 3954 / HTE831).